The following is a 341-amino-acid chain: L-threonine 3-dehydrogenase (341 aa).

Residue Cys-38 participates in Zn(2+) binding. Active-site charge relay system residues include Thr-40 and His-43. His-63, Glu-64, Cys-93, Cys-96, Cys-99, and Cys-107 together coordinate Zn(2+). Residues Ile-175, Asp-195, Arg-200, 262–264 (LGI), and 286–287 (IY) each bind NAD(+).

The protein belongs to the zinc-containing alcohol dehydrogenase family. As to quaternary structure, homotetramer. Zn(2+) is required as a cofactor.

Its subcellular location is the cytoplasm. It catalyses the reaction L-threonine + NAD(+) = (2S)-2-amino-3-oxobutanoate + NADH + H(+). It functions in the pathway amino-acid degradation; L-threonine degradation via oxydo-reductase pathway; glycine from L-threonine: step 1/2. Catalyzes the NAD(+)-dependent oxidation of L-threonine to 2-amino-3-ketobutyrate. The chain is L-threonine 3-dehydrogenase from Shewanella frigidimarina (strain NCIMB 400).